The primary structure comprises 277 residues: Bifunctional protein FolD (277 aa).

NADP(+) contacts are provided by residues 164–166, serine 189, and threonine 230; that span reads GRS.

This sequence belongs to the tetrahydrofolate dehydrogenase/cyclohydrolase family. As to quaternary structure, homodimer.

The catalysed reaction is (6R)-5,10-methylene-5,6,7,8-tetrahydrofolate + NADP(+) = (6R)-5,10-methenyltetrahydrofolate + NADPH. It catalyses the reaction (6R)-5,10-methenyltetrahydrofolate + H2O = (6R)-10-formyltetrahydrofolate + H(+). It functions in the pathway one-carbon metabolism; tetrahydrofolate interconversion. Its function is as follows. Catalyzes the oxidation of 5,10-methylenetetrahydrofolate to 5,10-methenyltetrahydrofolate and then the hydrolysis of 5,10-methenyltetrahydrofolate to 10-formyltetrahydrofolate. The chain is Bifunctional protein FolD from Clostridium perfringens (strain SM101 / Type A).